The following is a 414-amino-acid chain: Chaperone protein dnaJ 39 (414 aa).

Positions 1 to 24 are enriched in basic and acidic residues; that stretch reads MATHSSRSENKDAGEEDELRRRNP. Residues 1 to 36 are disordered; that stretch reads MATHSSRSENKDAGEEDELRRRNPYEVLGIPSNSTD. One can recognise a J domain in the interval 23–88; sequence NPYEVLGIPS…ENRRLYDTTG (66 aa). The stretch at 296–324 forms a coiled coil; it reads EKESLRSTEAQIVSKRTELLKFEAEYHEV. Positions 362–395 are disordered; sequence TKQGSSKSRSWSKKKSSLLMEPREEGEVAVREEG. The segment covering 382 to 395 has biased composition (basic and acidic residues); the sequence is EPREEGEVAVREEG.

This sequence belongs to the DnaJ family. C/III subfamily. Expressed constitutively at low levels in seedlings, roots, leaves, stems, flowers and siliques.

It is found in the membrane. In terms of biological role, plays a continuous role in plant development probably in the structural organization of compartments. Seems to be involved in early gravitropic signal transduction within the gravity-perceiving cells (statocytes). This Arabidopsis thaliana (Mouse-ear cress) protein is Chaperone protein dnaJ 39 (ATJ39).